The chain runs to 341 residues: Ferredoxin--NADP reductase (341 aa).

The FAD site is built by Glu-36, Gln-44, Phe-49, Val-89, Phe-123, Asp-289, and Thr-329.

The protein belongs to the ferredoxin--NADP reductase type 2 family. As to quaternary structure, homodimer. The cofactor is FAD.

The enzyme catalyses 2 reduced [2Fe-2S]-[ferredoxin] + NADP(+) + H(+) = 2 oxidized [2Fe-2S]-[ferredoxin] + NADPH. In Ligilactobacillus salivarius (strain UCC118) (Lactobacillus salivarius), this protein is Ferredoxin--NADP reductase.